We begin with the raw amino-acid sequence, 153 residues long: Large ribosomal subunit protein uL22 (153 aa).

The protein belongs to the universal ribosomal protein uL22 family. In terms of assembly, part of the 50S ribosomal subunit.

Functionally, this protein binds specifically to 23S rRNA. It makes multiple contacts with different domains of the 23S rRNA in the assembled 50S subunit and ribosome. The globular domain of the protein is located near the polypeptide exit tunnel on the outside of the subunit, while an extended beta-hairpin is found that lines the wall of the exit tunnel in the center of the 70S ribosome. The polypeptide is Large ribosomal subunit protein uL22 (Methanocella arvoryzae (strain DSM 22066 / NBRC 105507 / MRE50)).